We begin with the raw amino-acid sequence, 144 residues long: MIKLECLQDPSPRKRRTKLLGRGPSSGHGKTSGRGHKGDGSRSGYKRRFGYEGGGVPLYRRVPTRGFSHKRFDKCVEEITTQRLNEIFDNGAEVSLEALKERKVIHRETSRVKVILKGALDKKLVWKDAAIVLSEGVKSLIEAV.

The segment at 1–48 is disordered; that stretch reads MIKLECLQDPSPRKRRTKLLGRGPSSGHGKTSGRGHKGDGSRSGYKRR.

Belongs to the universal ribosomal protein uL15 family. Part of the 50S ribosomal subunit.

Binds to the 23S rRNA. This Chlamydia trachomatis serovar L2 (strain ATCC VR-902B / DSM 19102 / 434/Bu) protein is Large ribosomal subunit protein uL15.